The primary structure comprises 522 residues: Sterol O-acyltransferase 2 (522 aa).

Disordered regions lie at residues 1 to 36 (MEPG…HRAP) and 74 to 96 (SYPS…TQEP). The Cytoplasmic portion of the chain corresponds to 1–120 (MEPGGARLRL…LDELMEVQHF (120 aa)). A compositionally biased stretch (basic and acidic residues) spans 17 to 36 (GGERERQPCGDGNTETHRAP). His119 contributes to the cholesterol binding site. Residues 121–142 (RTIYHMFIAGLCVFIISTLAID) traverse the membrane as a helical segment. The Lumenal portion of the chain corresponds to 143-162 (FIDEGRLLLEFDLLIFSFGQ). A helical membrane pass occupies residues 163–188 (LPLALVTWVPMFLSTLLAPYQALRLW). The Cytoplasmic portion of the chain corresponds to 189–196 (ARGTWTQA). Residues 197–220 (TGLGCALLAAHAVVLCALPVHVAV) traverse the membrane as a helical segment. Residues 221-228 (EHQLPPAS) are Lumenal-facing. Residues 229-252 (RCVLVFEQVRFLMKSYSFLREAVP) form a helical membrane-spanning segment. Over 253-293 (GTLRARRGEGIQAPSFSSYLYFLFCPTLIYRETYPRTPYVR) the chain is Cytoplasmic. A Cysteine sulfenic acid (-SOH); alternate modification is found at Cys277. Cys277 participates in a covalent cross-link: Glycyl cysteine thioester (Cys-Gly) (interchain with G-Cter in ubiquitin); alternate. The helical transmembrane segment at 294 to 326 (WNYVAKNFAQALGCVLYACFILGRLCVPVFANM) threads the bilayer. The Lumenal segment spans residues 327-343 (SREPFSTRALVLSILHA). A helical membrane pass occupies residues 344–369 (TLPGIFMLLLIFFAFLHCWLNAFAEM). The Cytoplasmic portion of the chain corresponds to 370-417 (LRFGDRMFYRDWWNSTSFSNYYRTWNVVVHDWLYSYVYQDGLRLLGAR). An FYXDWWN motif motif is present at residues 377–383 (FYRDWWN). An acyl-CoA is bound by residues Asn389, Arg392, Asn395, His399, Tyr407, and Ser430. The chain crosses the membrane as a helical span at residues 418 to 442 (ARGVAMLGVFLVSAVAHEYIFCFVL). Residue His434 is part of the active site. At 443-448 (GFFYPV) the chain is on the lumenal side. Residues 449–464 (MLILFLVIGGMLNFMM) traverse the membrane as a helical segment. Residues 465-470 (HDQRTG) lie on the Cytoplasmic side of the membrane. The helical transmembrane segment at 471–502 (PAWNVLMWTMLFLGQGIQVSLYCQEWYARRHC) threads the bilayer. Residues 503 to 522 (PLPQATFWGLVTPRSWSCHT) are Lumenal-facing.

Belongs to the membrane-bound acyltransferase family. Sterol o-acyltransferase subfamily. In terms of assembly, may form homo- or heterodimers. Interacts with INSIG1; the interaction is direct and promotes association with AMFR/gp78. In terms of processing, polyubiquitinated by AMFR/gp78 at Cys-277, leading to its degradation when the lipid levels are low. Association with AMFR/gp78 is mediated via interaction with INSIG1. High concentration of cholesterol and fatty acid results in Cys-277 oxidation, preventing ubiquitination at the same site, resulting in protein stabilization. Post-translationally, oxidized at Cys-277: high concentration of cholesterol and fatty acid induce reactive oxygen species, which oxidizes Cys-277, preventing ubiquitination at the same site, and resulting in protein stabilization. As to expression, expression seems confined in hepatocytes and enterocytes.

The protein resides in the endoplasmic reticulum membrane. The enzyme catalyses a sterol + a long-chain fatty acyl-CoA = a long-chain 3-hydroxysterol ester + CoA. The catalysed reaction is cholesterol + an acyl-CoA = a cholesterol ester + CoA. It carries out the reaction cholesterol + (9Z)-octadecenoyl-CoA = cholesteryl (9Z-octadecenoate) + CoA. It catalyses the reaction (5Z,8Z,11Z,14Z,17Z)-eicosapentaenoyl-CoA + cholesterol = (5Z,8Z,11Z,14Z,17Z-eicosapentaenoyl)-cholesterol + CoA. The enzyme catalyses (9Z,12Z,15Z)-octadecatrienoyl-CoA + cholesterol = (9Z,12Z,15Z-octadecatrienoyl)-cholesterol + CoA. The catalysed reaction is (5Z,8Z,11Z,14Z)-eicosatetraenoyl-CoA + cholesterol = cholesteryl (5Z,8Z,11Z,14Z)-eicosatetraenoate + CoA. Catalyzes the formation of fatty acid-cholesterol esters, which are less soluble in membranes than cholesterol. Plays a role in lipoprotein assembly and dietary cholesterol absorption. Utilizes oleoyl-CoA ((9Z)-octadecenoyl-CoA) and linolenoyl-CoA ((9Z,12Z,15Z)-octadecatrienoyl-CoA) as substrates. May provide cholesteryl esters for lipoprotein secretion from hepatocytes and intestinal mucosa. Its function is as follows. Has lower enzymatic activity compared to isoform 1. This is Sterol O-acyltransferase 2 from Homo sapiens (Human).